Consider the following 147-residue polypeptide: MALKAQNTISGKEGRLFLDGEEMAHIKTFEANVEKNKSEVNIMGRRMTGHKTTGANGTGTATFYKVTSKFVLLMMDYVKKGSDPYFTLQAVLDDQSSGRGTERVTLYDVNFDSAKIASLDVDSEALEEEVPFTFEDFDVPEKLSDTF.

This sequence to B.subtilis YqbM.

This Bacillus subtilis (strain 168) protein is Phage-like element PBSX protein XkdM (xkdM).